Here is a 247-residue protein sequence, read N- to C-terminus: Triosephosphate isomerase (247 aa).

9–11 (NWK) contacts substrate. H94 acts as the Electrophile in catalysis. E165 (proton acceptor) is an active-site residue. Substrate contacts are provided by residues G171, S209, and 230–231 (GG).

Belongs to the triosephosphate isomerase family. Homodimer.

It localises to the cytoplasm. The catalysed reaction is D-glyceraldehyde 3-phosphate = dihydroxyacetone phosphate. It participates in carbohydrate biosynthesis; gluconeogenesis. Its pathway is carbohydrate degradation; glycolysis; D-glyceraldehyde 3-phosphate from glycerone phosphate: step 1/1. Its function is as follows. Involved in the gluconeogenesis. Catalyzes stereospecifically the conversion of dihydroxyacetone phosphate (DHAP) to D-glyceraldehyde-3-phosphate (G3P). The chain is Triosephosphate isomerase from Albidiferax ferrireducens (strain ATCC BAA-621 / DSM 15236 / T118) (Rhodoferax ferrireducens).